Consider the following 122-residue polypeptide: MVKKVNKSEVRIKKHNRIRNRFSGTPTRPRLAVFRSNNHMYAQIIDDTVGNTLVSASTLEKGVKAELEKTNDVAAAAMLGTVIAKKALEKGITTVVFDRGGFIYQGKVQALAEAAREAGLNF.

It belongs to the universal ribosomal protein uL18 family. In terms of assembly, part of the 50S ribosomal subunit; part of the 5S rRNA/L5/L18/L25 subcomplex. Contacts the 5S and 23S rRNAs.

Its function is as follows. This is one of the proteins that bind and probably mediate the attachment of the 5S RNA into the large ribosomal subunit, where it forms part of the central protuberance. The polypeptide is Large ribosomal subunit protein uL18 (Lachnoclostridium phytofermentans (strain ATCC 700394 / DSM 18823 / ISDg) (Clostridium phytofermentans)).